The chain runs to 209 residues: Ribonuclease HII (209 aa).

Residues 18–209 (SLVAGVDEVG…FKPVKALLER (192 aa)) enclose the RNase H type-2 domain. 3 residues coordinate a divalent metal cation: Asp-24, Glu-25, and Asp-116.

It belongs to the RNase HII family. Mn(2+) is required as a cofactor. The cofactor is Mg(2+).

It is found in the cytoplasm. The catalysed reaction is Endonucleolytic cleavage to 5'-phosphomonoester.. Functionally, endonuclease that specifically degrades the RNA of RNA-DNA hybrids. This is Ribonuclease HII from Shewanella oneidensis (strain ATCC 700550 / JCM 31522 / CIP 106686 / LMG 19005 / NCIMB 14063 / MR-1).